Reading from the N-terminus, the 248-residue chain is Ribonuclease PH (248 aa).

Residues Arg-93 and 131–133 each bind phosphate; that span reads GTR.

Belongs to the RNase PH family. As to quaternary structure, homohexameric ring arranged as a trimer of dimers.

The enzyme catalyses tRNA(n+1) + phosphate = tRNA(n) + a ribonucleoside 5'-diphosphate. Functionally, phosphorolytic 3'-5' exoribonuclease that plays an important role in tRNA 3'-end maturation. Removes nucleotide residues following the 3'-CCA terminus of tRNAs; can also add nucleotides to the ends of RNA molecules by using nucleoside diphosphates as substrates, but this may not be physiologically important. Probably plays a role in initiation of 16S rRNA degradation (leading to ribosome degradation) during starvation. This is Ribonuclease PH from Bifidobacterium longum (strain NCC 2705).